The chain runs to 517 residues: Bifunctional purine biosynthesis protein PurH (517 aa).

In terms of domain architecture, MGS-like spans 1–145 (MSPLALVSVS…KNHKDVSVLV (145 aa)).

This sequence belongs to the PurH family.

It catalyses the reaction (6R)-10-formyltetrahydrofolate + 5-amino-1-(5-phospho-beta-D-ribosyl)imidazole-4-carboxamide = 5-formamido-1-(5-phospho-D-ribosyl)imidazole-4-carboxamide + (6S)-5,6,7,8-tetrahydrofolate. The catalysed reaction is IMP + H2O = 5-formamido-1-(5-phospho-D-ribosyl)imidazole-4-carboxamide. It functions in the pathway purine metabolism; IMP biosynthesis via de novo pathway; 5-formamido-1-(5-phospho-D-ribosyl)imidazole-4-carboxamide from 5-amino-1-(5-phospho-D-ribosyl)imidazole-4-carboxamide (10-formyl THF route): step 1/1. Its pathway is purine metabolism; IMP biosynthesis via de novo pathway; IMP from 5-formamido-1-(5-phospho-D-ribosyl)imidazole-4-carboxamide: step 1/1. This chain is Bifunctional purine biosynthesis protein PurH, found in Prochlorococcus marinus (strain AS9601).